A 194-amino-acid polypeptide reads, in one-letter code: ATP synthase subunit b 1 (194 aa).

The helical transmembrane segment at Met1–Asp21 threads the bilayer.

The protein belongs to the ATPase B chain family. F-type ATPases have 2 components, F(1) - the catalytic core - and F(0) - the membrane proton channel. F(1) has five subunits: alpha(3), beta(3), gamma(1), delta(1), epsilon(1). F(0) has three main subunits: a(1), b(2) and c(10-14). The alpha and beta chains form an alternating ring which encloses part of the gamma chain. F(1) is attached to F(0) by a central stalk formed by the gamma and epsilon chains, while a peripheral stalk is formed by the delta and b chains.

The protein resides in the cell inner membrane. Its function is as follows. F(1)F(0) ATP synthase produces ATP from ADP in the presence of a proton or sodium gradient. F-type ATPases consist of two structural domains, F(1) containing the extramembraneous catalytic core and F(0) containing the membrane proton channel, linked together by a central stalk and a peripheral stalk. During catalysis, ATP synthesis in the catalytic domain of F(1) is coupled via a rotary mechanism of the central stalk subunits to proton translocation. In terms of biological role, component of the F(0) channel, it forms part of the peripheral stalk, linking F(1) to F(0). The polypeptide is ATP synthase subunit b 1 (Granulibacter bethesdensis (strain ATCC BAA-1260 / CGDNIH1)).